Consider the following 132-residue polypeptide: Thioredoxin H4-2 (132 aa).

A Thioredoxin domain is found at 18-130 (DFKGGNVHVI…LEKKVQALAD (113 aa)). Residues cysteine 56 and cysteine 59 each act as nucleophile in the active site. An intrachain disulfide couples cysteine 56 to cysteine 59.

It belongs to the thioredoxin family. Plant H-type subfamily.

The protein localises to the cytoplasm. Functionally, probable thiol-disulfide oxidoreductase that may be involved in the redox regulation of a number of cytosolic enzymes. The chain is Thioredoxin H4-2 from Oryza sativa subsp. japonica (Rice).